The chain runs to 287 residues: N-acetylmannosamine kinase (287 aa).

Residues 5–12 and 131–138 contribute to the ATP site; these read AIDIGGTK and GVGGGIII. Positions 155, 165, 167, and 172 each coordinate Zn(2+).

The protein belongs to the ROK (NagC/XylR) family. NanK subfamily. As to quaternary structure, homodimer.

The enzyme catalyses an N-acyl-D-mannosamine + ATP = an N-acyl-D-mannosamine 6-phosphate + ADP + H(+). It participates in amino-sugar metabolism; N-acetylneuraminate degradation; D-fructose 6-phosphate from N-acetylneuraminate: step 2/5. Functionally, catalyzes the phosphorylation of N-acetylmannosamine (ManNAc) to ManNAc-6-P. This chain is N-acetylmannosamine kinase, found in Vibrio cholerae serotype O1 (strain ATCC 39541 / Classical Ogawa 395 / O395).